We begin with the raw amino-acid sequence, 356 residues long: NADH-quinone oxidoreductase subunit H (356 aa).

9 consecutive transmembrane segments (helical) span residues 16–36 (IAVL…AFLL), 52–72 (PNVV…KFVF), 85–105 (LYLL…AVVP), 117–137 (VGIL…IIGG), 163–183 (IGFI…SEII), 201–221 (WPMP…ISAL), 254–274 (FMVG…ILFF), 295–315 (AWYF…FAMV), and 334–354 (IFLP…VYGP).

Belongs to the complex I subunit 1 family. As to quaternary structure, NDH-1 is composed of 14 different subunits. Subunits NuoA, H, J, K, L, M, N constitute the membrane sector of the complex.

It is found in the cell inner membrane. The enzyme catalyses a quinone + NADH + 5 H(+)(in) = a quinol + NAD(+) + 4 H(+)(out). Functionally, NDH-1 shuttles electrons from NADH, via FMN and iron-sulfur (Fe-S) centers, to quinones in the respiratory chain. The immediate electron acceptor for the enzyme in this species is believed to be ubiquinone. Couples the redox reaction to proton translocation (for every two electrons transferred, four hydrogen ions are translocated across the cytoplasmic membrane), and thus conserves the redox energy in a proton gradient. This subunit may bind ubiquinone. The chain is NADH-quinone oxidoreductase subunit H from Maricaulis maris (strain MCS10) (Caulobacter maris).